We begin with the raw amino-acid sequence, 215 residues long: Ras-like GTP-binding protein RHO1 (215 aa).

GTP contacts are provided by alanine 30, valine 31, glycine 32, lysine 33, threonine 34, and cysteine 35. Threonine 34 contributes to the Mg(2+) binding site. 2 consecutive short sequence motifs (switch) follow at residues 43 to 54 and 74 to 93; these read GEIPTAYVPTVF and DTAG…ADSD. Mg(2+) is bound at residue threonine 52. GTP contacts are provided by aspartate 135 and serine 166. The tract at residues 194 to 215 is disordered; the sequence is VTTQAKSQESTQQKKKSKCLLQ. Over residues 195-204 the composition is skewed to low complexity; sequence TTQAKSQEST. Residues 206 to 215 show a composition bias toward basic residues; the sequence is QKKKSKCLLQ. At cysteine 212 the chain carries Cysteine methyl ester. Cysteine 212 carries S-geranylgeranyl cysteine lipidation. The propeptide at 213 to 215 is removed in mature form; sequence LLQ.

It belongs to the small GTPase superfamily. Rho family. In terms of assembly, interacts (GTP-bound form) with formin1 (via GBD/FH3 domain); the interaction activates formin1. Interacts (GTP-bound form) with profilin1. Interacts (GDP-bound form and when prenylated) with RhoGDI. The cofactor is Mg(2+).

It localises to the cell membrane. The protein resides in the cytoplasm. It is found in the cytoskeleton. Its subcellular location is the cell projection. The protein localises to the phagocytic cup. It localises to the cytoplasmic vesicle. The protein resides in the phagosome. It carries out the reaction GTP + H2O = GDP + phosphate + H(+). Its activity is regulated as follows. Regulated by guanine nucleotide exchange factors (GEFs) which promote the exchange of bound GDP for free GTP, GTPase activating proteins (GAPs) which increase the GTP hydrolysis activity and GDP dissociation inhibitors which inhibit the dissociation of the nucleotide from the GTPase. Functionally, small GTPase which cycles between active GTP-bound and inactive GDP-bound states. Involved in actin cytoskeleton remodeling. Regulates phagocytosis by modulating actin cytoskeleton dynamics through the recruitment of formin1 and profilin1 to the phagocytosis nucleation site. The chain is Ras-like GTP-binding protein RHO1 from Entamoeba histolytica (strain ATCC 30459 / HM-1:IMSS / ABRM).